The sequence spans 85 residues: MNYLVFFSLALLLMTGVESVRDGYIADDKNCAYFCGRNAYCDDECKKNGAESGYCQWAGVYGNACWCYKLPDKVPIRVPGKCNGG.

Residues 1-19 (MNYLVFFSLALLLMTGVES) form the signal peptide. In terms of domain architecture, LCN-type CS-alpha/beta spans 21 to 83 (RDGYIADDKN…VPIRVPGKCN (63 aa)). 4 disulfide bridges follow: Cys31–Cys82, Cys35–Cys55, Cys41–Cys65, and Cys45–Cys67.

It belongs to the long (4 C-C) scorpion toxin superfamily. Sodium channel inhibitor family. Alpha subfamily. Expressed by the venom gland.

The protein localises to the secreted. Binds to sodium channels (Nav) and inhibits the inactivation of the activated channels, thereby blocking neuronal transmission. Tested on mice, has antitumor effect and strong inhibitory effect on pain. In Olivierus martensii (Manchurian scorpion), this protein is Toxin BmKT.